A 275-amino-acid chain; its full sequence is Protein rolling stone (275 aa).

6 consecutive transmembrane segments (helical) span residues Leu-45–Val-65, Phe-72–Ala-92, Trp-127–Leu-147, Ile-162–Pro-182, Ile-185–Tyr-205, and Met-232–Leu-252.

In terms of tissue distribution, expressed in cells of the somatic mesoderm, most notably the muscle founder cells, between embryonic stages 12 and 14, in growing muscle fibers in dorsal, lateral and ventral positions. At stage 16 strongest expression is in some ventral muscles and muscle 8. At stages 16/17 expression is restricted to some cells of the CNS, the brain and the gonads.

Its subcellular location is the membrane. In terms of biological role, may have a central role in the fusion process during myogenesis, within the somatic mesoderm. In Drosophila melanogaster (Fruit fly), this protein is Protein rolling stone (rost).